Here is a 296-residue protein sequence, read N- to C-terminus: Phosphatidylglycerol--prolipoprotein diacylglyceryl transferase (296 aa).

A run of 4 helical transmembrane segments spans residues 10–30 (IAFS…LAAF), 57–77 (LLFY…MLFY), 92–112 (VWEG…ACWL), and 119–139 (LHFF…LGFG). Arg-140 is a binding site for a 1,2-diacyl-sn-glycero-3-phospho-(1'-sn-glycerol). 3 helical membrane-spanning segments follow: residues 194–214 (QLYE…TFSM), 220–240 (YAVS…VEFV), and 254–274 (WLTM…VLLA).

Belongs to the Lgt family.

Its subcellular location is the cell inner membrane. It carries out the reaction L-cysteinyl-[prolipoprotein] + a 1,2-diacyl-sn-glycero-3-phospho-(1'-sn-glycerol) = an S-1,2-diacyl-sn-glyceryl-L-cysteinyl-[prolipoprotein] + sn-glycerol 1-phosphate + H(+). Its pathway is protein modification; lipoprotein biosynthesis (diacylglyceryl transfer). Functionally, catalyzes the transfer of the diacylglyceryl group from phosphatidylglycerol to the sulfhydryl group of the N-terminal cysteine of a prolipoprotein, the first step in the formation of mature lipoproteins. The chain is Phosphatidylglycerol--prolipoprotein diacylglyceryl transferase from Xanthomonas euvesicatoria pv. vesicatoria (strain 85-10) (Xanthomonas campestris pv. vesicatoria).